The sequence spans 292 residues: Nucleotide-binding protein SACE_2139 (292 aa).

15-22 (GLSGAGRS) serves as a coordination point for ATP. Residue 66–69 (DVRS) coordinates GTP.

The protein belongs to the RapZ-like family.

Its function is as follows. Displays ATPase and GTPase activities. The sequence is that of Nucleotide-binding protein SACE_2139 from Saccharopolyspora erythraea (strain ATCC 11635 / DSM 40517 / JCM 4748 / NBRC 13426 / NCIMB 8594 / NRRL 2338).